The sequence spans 658 residues: Pentatricopeptide repeat-containing protein 7, mitochondrial (658 aa).

The transit peptide at 1–29 (MRNCVSPLLFAWTKHLRLREFKIPFPNRL) directs the protein to the mitochondrion. PPR repeat units follow at residues 130–164 (VKKR…TPIW) and 220–254 (LYVE…SESL).

Its subcellular location is the mitochondrion. Mitochondrial RNA-binding protein required for the stability of the atp6 mRNA. The sequence is that of Pentatricopeptide repeat-containing protein 7, mitochondrial (ppr7) from Schizosaccharomyces pombe (strain 972 / ATCC 24843) (Fission yeast).